A 155-amino-acid chain; its full sequence is MKTQKRETNPIVTAIESIAEPLCIAEGFELVHVECVSDQGGMIVRIYLDKPGGITLDDCVHMTRHLGDIIDVELEEISAYRLEISSPGAKRPLKKLADFERFLGSRVKVEAVEPIGGRLKFTGILSKVQDGCVEVVVNNEPVVFHFEQISKSRLA.

This sequence belongs to the RimP family.

The protein resides in the cytoplasm. Functionally, required for maturation of 30S ribosomal subunits. This Desulforapulum autotrophicum (strain ATCC 43914 / DSM 3382 / VKM B-1955 / HRM2) (Desulfobacterium autotrophicum) protein is Ribosome maturation factor RimP.